The following is a 132-amino-acid chain: Large ribosomal subunit protein bL17 (132 aa).

This sequence belongs to the bacterial ribosomal protein bL17 family. Part of the 50S ribosomal subunit. Contacts protein L32.

This Polaromonas sp. (strain JS666 / ATCC BAA-500) protein is Large ribosomal subunit protein bL17.